The chain runs to 469 residues: MDNQQESISEDITGDLAAAVRKSWSESQDNPLLLNFNNSPIGTPTDRYSPEPATMMEGNAMNLSSLARGSTQQQQRLYGSSQTREKSDQQQQDYQLFKHHYSLGQETRESVSDILNDLTLGSPEPSERASPIRQPSVDVPPLTTRRSSIQDVQWIRHLLNPRSSFSGASSNEPTNSPGDFLNQSRAWITILHDSSAESLQAVIVLAESLKNVNSQYNLWVLHSSEVNAFQLAQVGIKTLIIDEYINLFMNFGTGSGFSASSQSTETKGELNFKWCKLFLFFSLIDRFELICYLSPTCLVLQNIDELLESTEVSDEIDNETCVLLSNKVNYINEDLVSVNQDQSSAENYDDDPQIIILKPNRAVAMCIKEYFTIYGNDFEGESKRSMFHQMNDLQIMKALFGDKWSYIDSVGYCAVPIASVPANRLNYKIIEFKILKPWERQNYIAAGQHRESIMNKWLDLWRDFLNQAN.

Position 1 is an N-acetylmethionine (Met-1). At Thr-13 the chain carries Phosphothreonine. Disordered regions lie at residues Lys-22–Met-55, Ala-67–Gln-92, and Asp-117–Thr-143. A phosphoserine mark is found at Ser-23, Ser-27, and Ser-39. Composition is skewed to polar residues over residues Ser-25–Gly-42 and Ala-67–Gln-82. Ser-122, Ser-130, Ser-136, Ser-147, and Ser-148 each carry phosphoserine.

In terms of biological role, seems to act indirectly to modify IME2 activity, thus permitting IME2 to carry out later meiotic functions. This chain is IME2-dependent-signaling protein (IDS2), found in Saccharomyces cerevisiae (strain ATCC 204508 / S288c) (Baker's yeast).